Consider the following 100-residue polypeptide: Small ribosomal subunit protein uS14c (100 aa).

It belongs to the universal ribosomal protein uS14 family. In terms of assembly, part of the 30S ribosomal subunit.

Its subcellular location is the plastid. It is found in the chloroplast. Functionally, binds 16S rRNA, required for the assembly of 30S particles. This Vitis vinifera (Grape) protein is Small ribosomal subunit protein uS14c.